Here is a 141-residue protein sequence, read N- to C-terminus: Nucleoside diphosphate kinase (141 aa).

Residues Lys11, Phe59, Arg87, Thr93, Arg104, and Asn114 each contribute to the ATP site. His117 acts as the Pros-phosphohistidine intermediate in catalysis.

Belongs to the NDK family. Homotetramer. Requires Mg(2+) as cofactor.

It is found in the cytoplasm. It catalyses the reaction a 2'-deoxyribonucleoside 5'-diphosphate + ATP = a 2'-deoxyribonucleoside 5'-triphosphate + ADP. The catalysed reaction is a ribonucleoside 5'-diphosphate + ATP = a ribonucleoside 5'-triphosphate + ADP. Functionally, major role in the synthesis of nucleoside triphosphates other than ATP. The ATP gamma phosphate is transferred to the NDP beta phosphate via a ping-pong mechanism, using a phosphorylated active-site intermediate. This chain is Nucleoside diphosphate kinase, found in Pseudomonas fluorescens (strain Pf0-1).